A 234-amino-acid polypeptide reads, in one-letter code: Leucyl/phenylalanyl-tRNA--protein transferase (234 aa).

This sequence belongs to the L/F-transferase family.

The protein localises to the cytoplasm. The enzyme catalyses N-terminal L-lysyl-[protein] + L-leucyl-tRNA(Leu) = N-terminal L-leucyl-L-lysyl-[protein] + tRNA(Leu) + H(+). It carries out the reaction N-terminal L-arginyl-[protein] + L-leucyl-tRNA(Leu) = N-terminal L-leucyl-L-arginyl-[protein] + tRNA(Leu) + H(+). It catalyses the reaction L-phenylalanyl-tRNA(Phe) + an N-terminal L-alpha-aminoacyl-[protein] = an N-terminal L-phenylalanyl-L-alpha-aminoacyl-[protein] + tRNA(Phe). Functionally, functions in the N-end rule pathway of protein degradation where it conjugates Leu, Phe and, less efficiently, Met from aminoacyl-tRNAs to the N-termini of proteins containing an N-terminal arginine or lysine. In Salmonella arizonae (strain ATCC BAA-731 / CDC346-86 / RSK2980), this protein is Leucyl/phenylalanyl-tRNA--protein transferase.